Consider the following 166-residue polypeptide: Sec-independent protein translocase protein TatB (166 aa).

Residues 2–22 (FNDIGALELLTLGVLAVLVFG) traverse the membrane as a helical segment. Residues 110-166 (TPAASDTANSAVNGSAGAAADGVTTSLTKTGETTPDLLKKAPQQAQPERPPFDADAT) are disordered. The span at 117 to 129 (ANSAVNGSAGAAA) shows a compositional bias: low complexity. Positions 132 to 142 (VTTSLTKTGET) are enriched in polar residues.

This sequence belongs to the TatB family. In terms of assembly, the Tat system comprises two distinct complexes: a TatABC complex, containing multiple copies of TatA, TatB and TatC subunits, and a separate TatA complex, containing only TatA subunits. Substrates initially bind to the TatABC complex, which probably triggers association of the separate TatA complex to form the active translocon.

Its subcellular location is the cell membrane. In terms of biological role, part of the twin-arginine translocation (Tat) system that transports large folded proteins containing a characteristic twin-arginine motif in their signal peptide across membranes. Together with TatC, TatB is part of a receptor directly interacting with Tat signal peptides. TatB may form an oligomeric binding site that transiently accommodates folded Tat precursor proteins before their translocation. This chain is Sec-independent protein translocase protein TatB, found in Streptomyces griseus subsp. griseus (strain JCM 4626 / CBS 651.72 / NBRC 13350 / KCC S-0626 / ISP 5235).